The sequence spans 515 residues: Ent-isokaurene C2/C3-hydroxylase (515 aa).

Residues 5 to 25 (LILDLCLSALFVVVLSKLVSS) traverse the membrane as a helical segment. Cys452 is a heme binding site.

Belongs to the cytochrome P450 family. Heme serves as cofactor.

It localises to the membrane. It catalyses the reaction ent-isokaurene + 2 reduced [NADPH--hemoprotein reductase] + 2 O2 = ent-isokaurene-2beta,3beta-diol + 2 oxidized [NADPH--hemoprotein reductase] + 2 H2O + 2 H(+). In terms of biological role, enzyme of the diterpenoid metabolism involved in the biosynthesis of antibacterial oryzalides such as phytocassane. The chain is Ent-isokaurene C2/C3-hydroxylase (CYP71Z6) from Oryza sativa subsp. japonica (Rice).